A 68-amino-acid polypeptide reads, in one-letter code: DNA-directed RNA polymerase subunit omega (68 aa).

This sequence belongs to the RNA polymerase subunit omega family. As to quaternary structure, the RNAP catalytic core consists of 2 alpha, 1 beta, 1 beta' and 1 omega subunit. When a sigma factor is associated with the core the holoenzyme is formed, which can initiate transcription.

It carries out the reaction RNA(n) + a ribonucleoside 5'-triphosphate = RNA(n+1) + diphosphate. Its function is as follows. Promotes RNA polymerase assembly. Latches the N- and C-terminal regions of the beta' subunit thereby facilitating its interaction with the beta and alpha subunits. In Neisseria meningitidis serogroup C (strain 053442), this protein is DNA-directed RNA polymerase subunit omega.